Consider the following 78-residue polypeptide: Large ribosomal subunit protein bL31 (78 aa).

Belongs to the bacterial ribosomal protein bL31 family. Type A subfamily. As to quaternary structure, part of the 50S ribosomal subunit.

In terms of biological role, binds the 23S rRNA. In Rickettsia conorii (strain ATCC VR-613 / Malish 7), this protein is Large ribosomal subunit protein bL31 (rpmE).